Reading from the N-terminus, the 143-residue chain is Midkine (143 aa).

The first 20 residues, 1–20, serve as a signal peptide directing secretion; the sequence is MQHRGFLLLTLLALLALTSA. Disulfide bonds link cysteine 37–cysteine 61, cysteine 45–cysteine 70, cysteine 52–cysteine 74, cysteine 84–cysteine 116, and cysteine 94–cysteine 126.

The protein belongs to the pleiotrophin family. As to quaternary structure, homodimer. Interacts with ALK. Interacts with LRP1; promotes neuronal survival. Interacts with LRP2. Interacts with NCAM1. Interacts (via C-terminal) with PTPRZ1 (via chondroitin sulfate chains); this interaction is inhibited by PTN; this interaction promotes neuronal migration. Interacts with NCL; this interaction promotes NCL clustering and lateral movements of this complex into lipid rafts leading to MDK internalization. Interacts with LRP6 and LRP8: this interaction is calcium dependent. Interacts with ITGA4. Interacts with ITGA6. Interacts with ITGB1. Interacts with ITGA4:ITGB1 complex; this interaction mediates MDK-induced osteoblast cells migration through PXN phosphorylation. Interacts with ITGA6:ITGB1 complex; this interaction mediates MDK-induced neurite outgrowth. Interacts with NOTCH2; this interaction mediates a nuclear accumulation of NOTCH2 and therefore activation of NOTCH2 signaling leading to interaction between HES1 and STAT3. Interacts with GPC2 (via heparan sulfate chain); this interaction is inhibited by heparin followed by chondroitin sulfate E; this interaction induces GPC2 clustering through heparan sulfate chain; this interaction induces neuronal cell adhesion and neurite outgrowth. Interacts with SDC3; this interaction induces SDC3 clustering; this interaction induces neuronal cell adhesion and neurite outgrowth. Interacts with SDC1. Interacts with CSPG5; this interaction promotes elongation of oligodendroglial precursor-like cells. Expressed in various tumor cell lines. In insulinoma tissue predominantly expressed in precancerous lesions.

The protein localises to the secreted. In terms of biological role, secreted protein that functions as a cytokine and growth factor and mediates its signal through cell-surface proteoglycan and non-proteoglycan receptors. Binds cell-surface proteoglycan receptors via their chondroitin sulfate (CS) groups. Thereby regulates many processes like inflammatory response, cell proliferation, cell adhesion, cell growth, cell survival, tissue regeneration, cell differentiation and cell migration. Participates in inflammatory processes by exerting two different activities. Firstly, mediates neutrophils and macrophages recruitment to the sites of inflammation both by direct action by cooperating namely with ITGB2 via LRP1 and by inducing chemokine expression. This inflammation can be accompanied by epithelial cell survival and smooth muscle cell migration after renal and vessel damage, respectively. Secondly, suppresses the development of tolerogenic dendric cells thereby inhibiting the differentiation of regulatory T cells and also promote T cell expansion through NFAT signaling and Th1 cell differentiation. Promotes tissue regeneration after injury or trauma. After heart damage negatively regulates the recruitment of inflammatory cells and mediates cell survival through activation of anti-apoptotic signaling pathways via MAPKs and AKT pathways through the activation of angiogenesis. Also facilitates liver regeneration as well as bone repair by recruiting macrophage at trauma site and by promoting cartilage development by facilitating chondrocyte differentiation. Plays a role in brain by promoting neural precursor cells survival and growth through interaction with heparan sulfate proteoglycans. Binds PTPRZ1 and promotes neuronal migration and embryonic neurons survival. Binds SDC3 or GPC2 and mediates neurite outgrowth and cell adhesion. Binds chondroitin sulfate E and heparin leading to inhibition of neuronal cell adhesion induced by binding with GPC2. Binds CSPG5 and promotes elongation of oligodendroglial precursor-like cells. Also binds ITGA6:ITGB1 complex; this interaction mediates MDK-induced neurite outgrowth. Binds LRP1; promotes neuronal survival. Binds ITGA4:ITGB1 complex; this interaction mediates MDK-induced osteoblast cells migration through PXN phosphorylation. Binds anaplastic lymphoma kinase (ALK) which induces ALK activation and subsequent phosphorylation of the insulin receptor substrate (IRS1), followed by the activation of mitogen-activated protein kinase (MAPK) and PI3-kinase, and the induction of cell proliferation. Promotes epithelial to mesenchymal transition through interaction with NOTCH2. During arteriogenesis, plays a role in vascular endothelial cell proliferation by inducing VEGFA expression and release which in turn induces nitric oxide synthase expression. Moreover activates vasodilation through nitric oxide synthase activation. Negatively regulates bone formation in response to mechanical load by inhibiting Wnt/beta-catenin signaling in osteoblasts. In addition plays a role in hippocampal development, working memory, auditory response, early fetal adrenal gland development and the female reproductive system. This chain is Midkine, found in Homo sapiens (Human).